The following is a 28-amino-acid chain: leu operon leader peptide (28 aa).

Involved in control of the biosynthesis of leucine. The protein is leu operon leader peptide (leuL) of Salmonella typhi.